The sequence spans 196 residues: DnaA initiator-associating protein DiaA (196 aa).

Residues 34–196 (LVQSLLNGNK…DNTLFPHQAD (163 aa)) form the SIS domain.

This sequence belongs to the SIS family. DiaA subfamily. In terms of assembly, homotetramer; dimer of dimers.

In terms of biological role, required for the timely initiation of chromosomal replication via direct interactions with the DnaA initiator protein. This is DnaA initiator-associating protein DiaA from Edwardsiella ictaluri (strain 93-146).